The following is a 239-amino-acid chain: Ribonuclease PH (239 aa).

Phosphate contacts are provided by residues arginine 86 and 124–126 (GTR).

This sequence belongs to the RNase PH family. In terms of assembly, homohexameric ring arranged as a trimer of dimers.

The catalysed reaction is tRNA(n+1) + phosphate = tRNA(n) + a ribonucleoside 5'-diphosphate. In terms of biological role, phosphorolytic 3'-5' exoribonuclease that plays an important role in tRNA 3'-end maturation. Removes nucleotide residues following the 3'-CCA terminus of tRNAs; can also add nucleotides to the ends of RNA molecules by using nucleoside diphosphates as substrates, but this may not be physiologically important. Probably plays a role in initiation of 16S rRNA degradation (leading to ribosome degradation) during starvation. This is Ribonuclease PH from Rhodopseudomonas palustris (strain BisB18).